We begin with the raw amino-acid sequence, 75 residues long: MREITESQLRYISGAGGAPATSANAAGAAAIVGALAGIPGGPLGVVVGAVSAGLTTAIGSTVGSGSASSSAGGGS.

Residues 1 to 15 (MREITESQLRYISGA) constitute a propeptide that is removed on maturation. Residues 30 to 50 (AIVGALAGIPGGPLGVVVGAV) traverse the membrane as a helical segment.

It is found in the secreted. Its subcellular location is the host cell membrane. Functionally, bactericidal antibiotic. Active on bacteria phylogenetically related to the producing strain. This chain is Microcin H47 (mchB), found in Escherichia coli O6:H1 (strain CFT073 / ATCC 700928 / UPEC).